Reading from the N-terminus, the 203-residue chain is MMSNEKEMTGTTIIAIKYDDGVLIGADSRTSMGAYVSSRVTDKLTQITDKIFVCRSGSSADTQMISSYLRMYLSMYSQLEDSIPQVQRAAALASKIIYENPSLLAGLIVAGYDDKPRVFNISLGGSLTERDWAIGGSGSAFIYGYCDVNWRSGMSLEEGIRFVRNAVSCAINRDNASGGCIRMSAISRTGVQRYFYPGDKVLQ.

The propeptide at 1–10 (MMSNEKEMTG) is removed in mature form. Residue Thr-11 is the Nucleophile of the active site.

Belongs to the peptidase T1B family. In terms of assembly, the 26S proteasome consists of a 20S proteasome core and two 19S regulatory subunits. The 20S proteasome core is composed of 28 subunits that are arranged in four stacked rings, resulting in a barrel-shaped structure. The two end rings are each formed by seven alpha subunits, and the two central rings are each formed by seven beta subunits. The catalytic chamber with the active sites is on the inside of the barrel.

It is found in the cytoplasm. It localises to the nucleus. The catalysed reaction is Cleavage of peptide bonds with very broad specificity.. Its function is as follows. The proteasome degrades poly-ubiquitinated proteins in the cytoplasm and in the nucleus. It is essential for the regulated turnover of proteins and for the removal of misfolded proteins. The proteasome is a multicatalytic proteinase complex that is characterized by its ability to cleave peptides with Arg, Phe, Tyr, Leu, and Glu adjacent to the leaving group at neutral or slightly basic pH. It has an ATP-dependent proteolytic activity. The sequence is that of Probable proteasome subunit beta type-1 (PRE3) from Encephalitozoon cuniculi (strain GB-M1) (Microsporidian parasite).